Reading from the N-terminus, the 371-residue chain is NADP-dependent oxidoreductase lnaE (371 aa).

NADP(+) contacts are provided by residues 172 to 175 (DEIG), Lys-198, Tyr-214, Asn-237, 277 to 283 (YGTIAEQ), and 307 to 309 (FGL).

This sequence belongs to the NADP-dependent oxidoreductase L4BD family.

Its pathway is secondary metabolite biosynthesis. Its function is as follows. NADP-dependent oxidoreductase; part of the lna gene cluster that mediates the biosynthesis of diastereomeric piperazines. Lna and lnb clusters encode sets of enzymes that produce overlapping sets of previously undescribed metabolites such as piperazinomycin-like metabolites or morpholine. The lna and lnb biosynthetic pathways appear to be part of a signaling network that controls the formation of sclerotia, a resilient overwintering structure. One primary function of the non-canonical nonribosomal peptide synthetases lnaA and lnbA consists in the reduction of L-tyrosine. The presence in the clusters of tailoring enzymes such as the oxidoreductases lnaB, lnbB, lnaE or lnbE, as well as of the cytochrome P450 monooxygenases lnaC, lnaD, or lnbC, might explain formation of various diastereomeric piperazines. The protein is NADP-dependent oxidoreductase lnaE of Aspergillus flavus (strain ATCC 200026 / FGSC A1120 / IAM 13836 / NRRL 3357 / JCM 12722 / SRRC 167).